The primary structure comprises 35 residues: Photosystem II reaction center protein T (35 aa).

The helical transmembrane segment at 3 to 23 (SVAYILILTLAIGVLFFAIAF) threads the bilayer.

Belongs to the PsbT family. In terms of assembly, PSII is composed of 1 copy each of membrane proteins PsbA, PsbB, PsbC, PsbD, PsbE, PsbF, PsbH, PsbI, PsbJ, PsbK, PsbL, PsbM, PsbT, PsbX, PsbY, PsbZ, Psb30/Ycf12, peripheral proteins PsbO, CyanoQ (PsbQ), PsbU, PsbV and a large number of cofactors. It forms dimeric complexes.

It localises to the cellular thylakoid membrane. Found at the monomer-monomer interface of the photosystem II (PS II) dimer, plays a role in assembly and dimerization of PSII. PSII is a light-driven water plastoquinone oxidoreductase, using light energy to abstract electrons from H(2)O, generating a proton gradient subsequently used for ATP formation. The chain is Photosystem II reaction center protein T from Nostoc sp. (strain PCC 7120 / SAG 25.82 / UTEX 2576).